The primary structure comprises 261 residues: Sepiapterin reductase (261 aa).

Methionine 1 is subject to N-acetylmethionine. An NADP(+)-binding site is contributed by 15-21 (GASRGFG). Serine 33 bears the Phosphoserine mark. Residue 43 to 44 (RS) participates in NADP(+) binding. Serine 46 bears the Phosphoserine mark. 70 to 71 (DL) serves as a coordination point for NADP(+). Substrate contacts are provided by residues 158-159 (SL) and tyrosine 171. Lysine 175 is a binding site for NADP(+). Serine 196 carries the post-translational modification Phosphoserine. Glycine 200 is a binding site for substrate. 202–207 (LDNDMQ) serves as a coordination point for NADP(+). At serine 214 the chain carries Phosphoserine. Substrate-binding residues include lysine 222 and aspartate 258.

The protein belongs to the sepiapterin reductase family. Homodimer.

The protein localises to the cytoplasm. The catalysed reaction is L-erythro-7,8-dihydrobiopterin + NADP(+) = L-sepiapterin + NADPH + H(+). It carries out the reaction (6R)-L-erythro-5,6,7,8-tetrahydrobiopterin + 2 NADP(+) = 6-pyruvoyl-5,6,7,8-tetrahydropterin + 2 NADPH + 2 H(+). Catalyzes the final one or two reductions in tetra-hydrobiopterin biosynthesis to form 5,6,7,8-tetrahydrobiopterin. The chain is Sepiapterin reductase (Spr) from Mus musculus (Mouse).